The chain runs to 336 residues: Ketol-acid reductoisomerase (NADP(+)) 1 (336 aa).

The KARI N-terminal Rossmann domain occupies 2 to 181; sequence AKVYYEKDVT…GATRAGVLET (180 aa). NADP(+)-binding positions include 25 to 28, Arg-48, Ser-52, and 82 to 85; these read YGSQ and DELQ. His-107 is an active-site residue. Gly-133 lines the NADP(+) pocket. One can recognise a KARI C-terminal knotted domain in the interval 182–327; the sequence is TFKEETETDL…RKLREMMPFV (146 aa). The Mg(2+) site is built by Asp-190, Glu-194, Glu-226, and Glu-230. Residue Ser-251 participates in substrate binding.

The protein belongs to the ketol-acid reductoisomerase family. The cofactor is Mg(2+).

It catalyses the reaction (2R)-2,3-dihydroxy-3-methylbutanoate + NADP(+) = (2S)-2-acetolactate + NADPH + H(+). The enzyme catalyses (2R,3R)-2,3-dihydroxy-3-methylpentanoate + NADP(+) = (S)-2-ethyl-2-hydroxy-3-oxobutanoate + NADPH + H(+). It participates in amino-acid biosynthesis; L-isoleucine biosynthesis; L-isoleucine from 2-oxobutanoate: step 2/4. Its pathway is amino-acid biosynthesis; L-valine biosynthesis; L-valine from pyruvate: step 2/4. Its function is as follows. Involved in the biosynthesis of branched-chain amino acids (BCAA). Catalyzes an alkyl-migration followed by a ketol-acid reduction of (S)-2-acetolactate (S2AL) to yield (R)-2,3-dihydroxy-isovalerate. In the isomerase reaction, S2AL is rearranged via a Mg-dependent methyl migration to produce 3-hydroxy-3-methyl-2-ketobutyrate (HMKB). In the reductase reaction, this 2-ketoacid undergoes a metal-dependent reduction by NADPH to yield (R)-2,3-dihydroxy-isovalerate. The polypeptide is Ketol-acid reductoisomerase (NADP(+)) 1 (Bacillus thuringiensis subsp. konkukian (strain 97-27)).